Here is a 138-residue protein sequence, read N- to C-terminus: Superoxide dismutase [Mn] (138 aa).

Mn(2+) contacts are provided by S1, H49, D133, and H137.

It belongs to the iron/manganese superoxide dismutase family. It depends on Mn(2+) as a cofactor.

It catalyses the reaction 2 superoxide + 2 H(+) = H2O2 + O2. Destroys superoxide anion radicals which are normally produced within the cells and which are toxic to biological systems. This chain is Superoxide dismutase [Mn] (sodA), found in Mycobacterium marinum.